Here is a 389-residue protein sequence, read N- to C-terminus: Naringenin-chalcone synthase (389 aa).

The active site involves C164.

This sequence belongs to the thiolase-like superfamily. Chalcone/stilbene synthases family. As to expression, expressed in glandular trichomes. Detected at low levels in female flowers, stems, seeds, leaves and roots.

The protein resides in the cytoplasm. The catalysed reaction is (E)-4-coumaroyl-CoA + 3 malonyl-CoA + 3 H(+) = 2',4,4',6'-tetrahydroxychalcone + 3 CO2 + 4 CoA. Functionally, chalcone synthase that can also use isovaleryl-CoA, isobutyryl-CoA or hexanoyl-CoA as substrates, but that is unable to produce olivetol or olivetolic acid. The polypeptide is Naringenin-chalcone synthase (CHS) (Cannabis sativa (Hemp)).